A 354-amino-acid chain; its full sequence is Protein-arginine kinase (354 aa).

A Phosphagen kinase C-terminal domain is found at 24-254 (IVLSSRIRLA…QQIIQQEKMA (231 aa)). Residues 27–31 (SSRIR), H92, R125, 176–180 (RASVM), and 207–212 (RGIYGE) each bind ATP. Positions 337-342 (RDYRRA) match the RDXXRA motif of the pArg binding pocket involved in allosteric regulation motif.

Belongs to the ATP:guanido phosphotransferase family.

It carries out the reaction L-arginyl-[protein] + ATP = N(omega)-phospho-L-arginyl-[protein] + ADP + H(+). With respect to regulation, appears to be allosterically activated by the binding of pArg-containing polypeptides to the pArg-binding pocket localized in the C-terminal domain of McsB. In terms of biological role, catalyzes the specific phosphorylation of arginine residues in a large number of proteins. Is part of the bacterial stress response system. Protein arginine phosphorylation has a physiologically important role and is involved in the regulation of many critical cellular processes, such as protein homeostasis, motility, competence, and stringent and stress responses, by regulating gene expression and protein activity. This Bacillus cereus (strain G9842) protein is Protein-arginine kinase.